We begin with the raw amino-acid sequence, 33 residues long: Photosystem II reaction center protein Psb30 (33 aa).

A helical membrane pass occupies residues 8 to 28 (QLGSLLLITVAGPLIVFFLFI).

The protein belongs to the Psb30/Ycf12 family. In terms of assembly, PSII is composed of 1 copy each of membrane proteins PsbA, PsbB, PsbC, PsbD, PsbE, PsbF, PsbH, PsbI, PsbJ, PsbK, PsbL, PsbM, PsbT, PsbY, PsbZ, Psb30/Ycf12, peripheral proteins of the oxygen-evolving complex and a large number of cofactors. It forms dimeric complexes.

Its subcellular location is the plastid. It localises to the chloroplast thylakoid membrane. In terms of biological role, a core subunit of photosystem II (PSII), probably helps stabilize the reaction center. The protein is Photosystem II reaction center protein Psb30 of Euglena anabaena (Euglenaria anabaena).